A 480-amino-acid chain; its full sequence is Zinc metalloproteinase/disintegrin (480 aa).

A signal peptide spans 1–20; the sequence is MIQVLLITICLAVFPFQGSS. Residues 21–190 constitute a propeptide that is removed on maturation; the sequence is IVLDSGNLNE…KASQLNVSPD (170 aa). Residues 197–391 form the Peptidase M12B domain; that stretch reads RFIKLAIYVD…HSPQCILNDP (195 aa). 2 N-linked (GlcNAc...) asparagine glycosylation sites follow: Asn-259 and Asn-279. Intrachain disulfides connect Cys-308–Cys-386, Cys-348–Cys-370, Cys-350–Cys-353, Cys-413–Cys-428, Cys-415–Cys-423, Cys-422–Cys-445, Cys-436–Cys-442, Cys-441–Cys-466, and Cys-454–Cys-473. His-333 is a binding site for Zn(2+). The active site involves Glu-334. Residues His-337 and His-343 each contribute to the Zn(2+) site. Residues 399–480 enclose the Disintegrin domain; it reads TPVSGNELLE…AGCPRNPFHA (82 aa). The short motif at 458–460 is the Cell attachment site element; it reads RGD.

It belongs to the venom metalloproteinase (M12B) family. P-II subfamily. P-IIa sub-subfamily. Monomer. Zn(2+) serves as cofactor. In terms of tissue distribution, expressed by the venom gland.

The protein resides in the secreted. Functionally, impairs hemostasis in the envenomed animal. In terms of biological role, inhibits platelet aggregation and bone resorption. This is Zinc metalloproteinase/disintegrin from Gloydius halys (Chinese water mocassin).